A 1077-amino-acid chain; its full sequence is Mitogen-activated protein kinase kinase kinase 9 (1077 aa).

Residues M1–E40 are disordered. Residues A14–G27 show a composition bias toward low complexity. The span at A28–A38 shows a compositional bias: acidic residues. The SH3 domain occupies A45–A109. A Protein kinase domain is found at L137 to F405. ATP is bound by residues I143–V151 and K164. D261 functions as the Proton acceptor in the catalytic mechanism. Phosphothreonine; by autocatalysis occurs at positions 297 and 298. Position 301 is a phosphoserine; by autocatalysis (S301). The residue at position 305 (T305) is a Phosphothreonine; by autocatalysis. 2 leucine-zipper regions span residues I423–L444 and L458–I479. The segment covering V491 to L503 has biased composition (basic residues). Disordered regions lie at residues V491–I511, S526–D606, E646–G713, L748–E790, R860–S971, and S986–S1011. S526 is modified (phosphoserine). Composition is skewed to polar residues over residues P559–R568 and P693–L709. Residues P755–L767 are compositionally biased toward basic and acidic residues. A compositionally biased stretch (polar residues) spans N863–S880. Positions G901–G915 are enriched in low complexity. Polar residues predominate over residues H987 to S1011.

It belongs to the protein kinase superfamily. STE Ser/Thr protein kinase family. MAP kinase kinase kinase subfamily. As to quaternary structure, homodimer. Mg(2+) serves as cofactor. In terms of processing, autophosphorylation on serine and threonine residues within the activation loop plays a role in enzyme activation. Thr-305 is likely to be the main autophosphorylation site. Autophosphorylation also occurs on Thr-297 and Ser-301. Expressed in cochlea and utricle.

It carries out the reaction L-seryl-[protein] + ATP = O-phospho-L-seryl-[protein] + ADP + H(+). The enzyme catalyses L-threonyl-[protein] + ATP = O-phospho-L-threonyl-[protein] + ADP + H(+). Its activity is regulated as follows. Homodimerization via the leucine zipper domains is required for autophosphorylation of multiple sites in the activation loop and subsequent activation. Autophosphorylation at Thr-305 is the key step in activation of MAP3K9/MLK1 and is required for full phosphorylation. Autophosphorylation at Thr-297 and Ser-301 have been shown to be of secondary importance in the activation of MAP3K9/MLK1. In terms of biological role, serine/threonine kinase which acts as an essential component of the MAP kinase signal transduction pathway. Plays an important role in the cascades of cellular responses evoked by changes in the environment. Once activated, acts as an upstream activator of the MKK/JNK signal transduction cascade through the phosphorylation of MAP2K4/MKK4 and MAP2K7/MKK7 which in turn activate the JNKs. The MKK/JNK signaling pathway regulates stress response via activator protein-1 (JUN) and GATA4 transcription factors. Also plays a role in mitochondrial death signaling pathway, including the release cytochrome c, leading to apoptosis. The chain is Mitogen-activated protein kinase kinase kinase 9 (Map3k9) from Mus musculus (Mouse).